Here is a 651-residue protein sequence, read N- to C-terminus: Mediator of RNA polymerase II transcription subunit 17 (651 aa).

Residues 51–83 are disordered; that stretch reads QGSGSEEEEAAGTEGDAQEWPGAGSSADQDDEE.

This sequence belongs to the Mediator complex subunit 17 family. As to quaternary structure, interacts with GATA1 and PPARG. Component of the Mediator complex, which is composed of MED1, MED4, MED6, MED7, MED8, MED9, MED10, MED11, MED12, MED13, MED13L, MED14, MED15, MED16, MED17, MED18, MED19, MED20, MED21, MED22, MED23, MED24, MED25, MED26, MED27, MED29, MED30, MED31, CCNC, CDK8 and CDC2L6/CDK11. The MED12, MED13, CCNC and CDK8 subunits form a distinct module termed the CDK8 module. Mediator containing the CDK8 module is less active than Mediator lacking this module in supporting transcriptional activation. Individual preparations of the Mediator complex lacking one or more distinct subunits have been variously termed ARC, CRSP, DRIP, PC2, SMCC and TRAP. Interacts with STAT2. Ubiquitous.

It localises to the nucleus. In terms of biological role, component of the Mediator complex, a coactivator involved in the regulated transcription of nearly all RNA polymerase II-dependent genes. Mediator functions as a bridge to convey information from gene-specific regulatory proteins to the basal RNA polymerase II transcription machinery. Mediator is recruited to promoters by direct interactions with regulatory proteins and serves as a scaffold for the assembly of a functional preinitiation complex with RNA polymerase II and the general transcription factors. The protein is Mediator of RNA polymerase II transcription subunit 17 (MED17) of Homo sapiens (Human).